Here is a 293-residue protein sequence, read N- to C-terminus: Formamidopyrimidine-DNA glycosylase (293 aa).

Catalysis depends on proline 2, which acts as the Schiff-base intermediate with DNA. Residue glutamate 3 is the Proton donor of the active site. The active-site Proton donor; for beta-elimination activity is the lysine 58. DNA is bound by residues histidine 104, arginine 123, and lysine 166. An FPG-type zinc finger spans residues 257 to 293 (QVYDREGEPCRTDGCEGVVKRFVQNGRSTFWCPKCQR). Residue arginine 283 is the Proton donor; for delta-elimination activity of the active site.

This sequence belongs to the FPG family. Monomer. It depends on Zn(2+) as a cofactor.

It catalyses the reaction Hydrolysis of DNA containing ring-opened 7-methylguanine residues, releasing 2,6-diamino-4-hydroxy-5-(N-methyl)formamidopyrimidine.. The enzyme catalyses 2'-deoxyribonucleotide-(2'-deoxyribose 5'-phosphate)-2'-deoxyribonucleotide-DNA = a 3'-end 2'-deoxyribonucleotide-(2,3-dehydro-2,3-deoxyribose 5'-phosphate)-DNA + a 5'-end 5'-phospho-2'-deoxyribonucleoside-DNA + H(+). Involved in base excision repair of DNA damaged by oxidation or by mutagenic agents. Acts as a DNA glycosylase that recognizes and removes damaged bases. Has a preference for oxidized purines, such as 7,8-dihydro-8-oxoguanine (8-oxoG). Has AP (apurinic/apyrimidinic) lyase activity and introduces nicks in the DNA strand. Cleaves the DNA backbone by beta-delta elimination to generate a single-strand break at the site of the removed base with both 3'- and 5'-phosphates. This is Formamidopyrimidine-DNA glycosylase from Bradyrhizobium sp. (strain ORS 278).